Reading from the N-terminus, the 189-residue chain is Peptidyl-tRNA hydrolase (189 aa).

Tyr-14 lines the tRNA pocket. Residue His-19 is the Proton acceptor of the active site. TRNA is bound by residues Tyr-64, Asn-66, and Asn-112.

Belongs to the PTH family. In terms of assembly, monomer.

It localises to the cytoplasm. It catalyses the reaction an N-acyl-L-alpha-aminoacyl-tRNA + H2O = an N-acyl-L-amino acid + a tRNA + H(+). Functionally, hydrolyzes ribosome-free peptidyl-tRNAs (with 1 or more amino acids incorporated), which drop off the ribosome during protein synthesis, or as a result of ribosome stalling. Its function is as follows. Catalyzes the release of premature peptidyl moieties from peptidyl-tRNA molecules trapped in stalled 50S ribosomal subunits, and thus maintains levels of free tRNAs and 50S ribosomes. The polypeptide is Peptidyl-tRNA hydrolase (Clostridium botulinum (strain 657 / Type Ba4)).